We begin with the raw amino-acid sequence, 360 residues long: Serine/threonine-protein kinase SAPK4 (360 aa).

A Protein kinase domain is found at 4 to 260; that stretch reads YEAVRDIGSG…MKEIKSHPWF (257 aa). Residues 10–18 and K33 each bind ATP; that span reads IGSGNFGVA. D123 (proton acceptor) is an active-site residue. The disordered stretch occupies residues 303–360; the sequence is TMPKSSRTGYWSDAGSDEEEKEEEERPEENEEEEEDEYDKRVKEVHASGELRMSSLRI. Residues 317–339 show a composition bias toward acidic residues; the sequence is GSDEEEKEEEERPEENEEEEEDE. The span at 340–351 shows a compositional bias: basic and acidic residues; that stretch reads YDKRVKEVHASG.

The protein belongs to the protein kinase superfamily. Ser/Thr protein kinase family. Post-translationally, may be phosphorylated. As to expression, expressed in leaf blades, leaf sheaths and roots. Expressed in shoots and roots of young seedlings.

The enzyme catalyses L-seryl-[protein] + ATP = O-phospho-L-seryl-[protein] + ADP + H(+). It carries out the reaction L-threonyl-[protein] + ATP = O-phospho-L-threonyl-[protein] + ADP + H(+). With respect to regulation, activated by hyperosmotic stress. May play a role in signal transduction of hyperosmotic response. The polypeptide is Serine/threonine-protein kinase SAPK4 (SAPK4) (Oryza sativa subsp. japonica (Rice)).